The sequence spans 434 residues: ATP-sensitive inward rectifier potassium channel 14 (434 aa).

Topologically, residues 1–81 (MGLARALRRL…LSDLFTTCVD (81 aa)) are cytoplasmic. The residue at position 79 (Cys79) is an S-nitrosocysteine. The chain crosses the membrane as a helical span at residues 82–108 (VRWRWMCLLFSCSFLASWLLFGLTFWL). The Extracellular segment spans residues 109–131 (IASLHGDLAAPPPPAPCFSQVAS). Positions 132 to 148 (FLAAFLFALETQTSIGY) form an intramembrane region, helical; Pore-forming. Residues 145–150 (SIGYGV) carry the Selectivity filter motif. At 149–157 (GVRSVTEEC) the chain is on the extracellular side. The helical transmembrane segment at 158 to 185 (PAAVAAVVLQCIAGCVLDAFVVGAVMAK) threads the bilayer. Topologically, residues 186-434 (MAKPKKRNET…TPTLALTLPP (249 aa)) are cytoplasmic. The tract at residues 398 to 434 (QEEDEEEDTKEGTSAETPERAASPQALTPTLALTLPP) is disordered. The span at 407-416 (KEGTSAETPE) shows a compositional bias: basic and acidic residues. Low complexity predominate over residues 418–434 (AASPQALTPTLALTLPP).

This sequence belongs to the inward rectifier-type potassium channel (TC 1.A.2.1) family. KCNJ14 subfamily.

The protein localises to the membrane. It catalyses the reaction K(+)(in) = K(+)(out). With respect to regulation, channel activity is regulated by variations of cytosolic pH; channels are activated by alkaline and inhibited by acidic pH values. Inhibited by Ba(2+) and Cs(+) in a voltage-dependent manner; sensitivity to those inhibitors is lower than in other Kir channels. Inward rectifier potassium channels are characterized by a greater tendency to allow potassium to flow into the cell rather than out of it. Their voltage dependence is regulated by the concentration of extracellular potassium; as external potassium is raised, the voltage range of the channel opening shifts to more positive voltages. This chain is ATP-sensitive inward rectifier potassium channel 14 (Kcnj14), found in Mus musculus (Mouse).